Here is a 794-residue protein sequence, read N- to C-terminus: cAMP and cAMP-inhibited cGMP 3',5'-cyclic phosphodiesterase 10A (794 aa).

3',5'-cyclic AMP is bound by residues 296 to 297, 340 to 341, T374, Q393, and H525; these read RC and IA. Residues 452 to 769 enclose the PDEase domain; that stretch reads TSEEWQGLMH…NQWEKVIRGE (318 aa). The Proton donor role is filled by H525. H525 contacts 3',5'-cyclic GMP. A divalent metal cation is bound by residues H529, H563, D564, and D674. Q726 is a 3',5'-cyclic AMP binding site. Residue Q726 coordinates 3',5'-cyclic GMP.

Belongs to the cyclic nucleotide phosphodiesterase family. In terms of assembly, homodimer. A divalent metal cation is required as a cofactor. In terms of tissue distribution, detected in striatum and testis (at protein level). Detected in whole brain, hippocampus, olfactory bulb, striatum neurons and testis.

It is found in the cytoplasm. The protein resides in the cytosol. It catalyses the reaction a nucleoside 3',5'-cyclic phosphate + H2O = a nucleoside 5'-phosphate + H(+). The enzyme catalyses 3',5'-cyclic AMP + H2O = AMP + H(+). It carries out the reaction 3',5'-cyclic GMP + H2O = GMP + H(+). Its pathway is purine metabolism; 3',5'-cyclic AMP degradation; AMP from 3',5'-cyclic AMP: step 1/1. It participates in purine metabolism; 3',5'-cyclic GMP degradation; GMP from 3',5'-cyclic GMP: step 1/1. Inhibited by dipyridamole and moderately by IBMX, zaprinast and rolipram. In terms of biological role, plays a role in signal transduction by regulating the intracellular concentration of cyclic nucleotides. Can hydrolyze both cAMP and cGMP, but has higher affinity for cAMP and is more efficient with cAMP as substrate. This is cAMP and cAMP-inhibited cGMP 3',5'-cyclic phosphodiesterase 10A (Pde10a) from Rattus norvegicus (Rat).